A 179-amino-acid chain; its full sequence is NADH-quinone oxidoreductase subunit B 1 (179 aa).

The [4Fe-4S] cluster site is built by C38, C39, C104, and C133.

It belongs to the complex I 20 kDa subunit family. As to quaternary structure, NDH-1 is composed of 14 different subunits. Subunits NuoB, C, D, E, F, and G constitute the peripheral sector of the complex. It depends on [4Fe-4S] cluster as a cofactor.

The protein resides in the cell membrane. It catalyses the reaction a quinone + NADH + 5 H(+)(in) = a quinol + NAD(+) + 4 H(+)(out). In terms of biological role, NDH-1 shuttles electrons from NADH, via FMN and iron-sulfur (Fe-S) centers, to quinones in the respiratory chain. The immediate electron acceptor for the enzyme in this species is believed to be ubiquinone. Couples the redox reaction to proton translocation (for every two electrons transferred, four hydrogen ions are translocated across the cytoplasmic membrane), and thus conserves the redox energy in a proton gradient. This Herpetosiphon aurantiacus (strain ATCC 23779 / DSM 785 / 114-95) protein is NADH-quinone oxidoreductase subunit B 1.